A 421-amino-acid chain; its full sequence is Gamma-glutamyl phosphate reductase (421 aa).

Belongs to the gamma-glutamyl phosphate reductase family.

Its subcellular location is the cytoplasm. The enzyme catalyses L-glutamate 5-semialdehyde + phosphate + NADP(+) = L-glutamyl 5-phosphate + NADPH + H(+). Its pathway is amino-acid biosynthesis; L-proline biosynthesis; L-glutamate 5-semialdehyde from L-glutamate: step 2/2. Its function is as follows. Catalyzes the NADPH-dependent reduction of L-glutamate 5-phosphate into L-glutamate 5-semialdehyde and phosphate. The product spontaneously undergoes cyclization to form 1-pyrroline-5-carboxylate. This Pseudomonas syringae pv. tomato (strain ATCC BAA-871 / DC3000) protein is Gamma-glutamyl phosphate reductase.